The primary structure comprises 238 residues: Ribonuclease HII (238 aa).

The 186-residue stretch at 12 to 197 folds into the RNase H type-2 domain; the sequence is GIVAGVDEAG…VLELLTDDLL (186 aa). Residues aspartate 18, glutamate 19, and aspartate 107 each contribute to the a divalent metal cation site.

This sequence belongs to the RNase HII family. Mn(2+) is required as a cofactor. Mg(2+) serves as cofactor.

It is found in the cytoplasm. It carries out the reaction Endonucleolytic cleavage to 5'-phosphomonoester.. Its function is as follows. Endonuclease that specifically degrades the RNA of RNA-DNA hybrids. The polypeptide is Ribonuclease HII (rnhB) (Thermotoga maritima (strain ATCC 43589 / DSM 3109 / JCM 10099 / NBRC 100826 / MSB8)).